A 466-amino-acid polypeptide reads, in one-letter code: Cysteine--tRNA ligase (466 aa).

Cysteine 28 is a binding site for Zn(2+). The short motif at 30–40 (PTVYNYIHIGN) is the 'HIGH' region element. Residues cysteine 208, histidine 233, and glutamate 237 each contribute to the Zn(2+) site. The short motif at 265-269 (KMSKS) is the 'KMSKS' region element. Lysine 268 serves as a coordination point for ATP.

Belongs to the class-I aminoacyl-tRNA synthetase family. In terms of assembly, monomer. The cofactor is Zn(2+).

It is found in the cytoplasm. The catalysed reaction is tRNA(Cys) + L-cysteine + ATP = L-cysteinyl-tRNA(Cys) + AMP + diphosphate. This Staphylococcus aureus (strain bovine RF122 / ET3-1) protein is Cysteine--tRNA ligase.